A 1061-amino-acid polypeptide reads, in one-letter code: Transmembrane protease serine 9 (1061 aa).

Topologically, residues 3–31 are cytoplasmic; that stretch reads PAAPDLQPVPEVTKGVPVPTPDSGCCRAA. Residues 32 to 52 form a helical membrane-spanning segment; the sequence is VTTVVAISVASLTLGVLSAFL. At 53 to 1061 the chain is on the extracellular side; it reads SAQGVQVEHT…LGWIGQNIRE (1009 aa). Residues 155-192 form the LDL-receptor class A domain; that stretch reads HCPGNAFSCQNSQCVSKENPECDDRVDCSDGSDEAQCD. Cystine bridges form between Cys-156/Cys-168, Cys-163/Cys-182, Cys-176/Cys-191, and Cys-230/Cys-246. In terms of domain architecture, Peptidase S1 1 spans 205-438; the sequence is IVGGAEAAPG…LRDWILEVTS (234 aa). Catalysis depends on charge relay system residues His-245 and Asp-294. Intrachain disulfides connect Cys-328-Cys-395, Cys-360-Cys-374, and Cys-385-Cys-414. Ser-389 functions as the Charge relay system in the catalytic mechanism. A disordered region spans residues 443-499; it reads PVVPTEAPAPITPSTPWPTSPESRVPNTTAKPTVAPTPAPLHPSTAAKPQECGARPA. The segment covering 452-461 has biased composition (pro residues); the sequence is PITPSTPWPT. Low complexity predominate over residues 462 to 476; the sequence is SPESRVPNTTAKPTV. The N-linked (GlcNAc...) asparagine glycan is linked to Asn-469. The Peptidase S1 2 domain occupies 506 to 738; that stretch reads IVGGISAVSG…LKDWILKAMS (233 aa). The cysteines at positions 531 and 547 are disulfide-linked. Residue His-546 is the Charge relay system of the active site. Asn-549 carries N-linked (GlcNAc...) asparagine glycosylation. The active-site Charge relay system is Asp-594. 3 cysteine pairs are disulfide-bonded: Cys-628-Cys-695, Cys-660-Cys-674, and Cys-685-Cys-714. N-linked (GlcNAc...) asparagine glycans are attached at residues Asn-640 and Asn-665. Ser-689 (charge relay system) is an active-site residue. The span at 740–752 shows a compositional bias: low complexity; sequence DPSSTAHPHTSST. Disordered regions lie at residues 740–771 and 790–810; these read DPSS…IPEA and LNTT…APGT. The N-linked (GlcNAc...) asparagine glycan is linked to Asn-791. Residues 792 to 808 are compositionally biased toward low complexity; that stretch reads TTLSARSTTTRRQTPAP. Positions 830-1060 constitute a Peptidase S1 3 domain; it reads IVGGSAASLG…VLGWIGQNIR (231 aa). 4 cysteine pairs are disulfide-bonded: Cys-856-Cys-872, Cys-951-Cys-1017, Cys-982-Cys-996, and Cys-1007-Cys-1036.

Belongs to the peptidase S1 family. Post-translationally, proteolytically cleaved to generate 3 independent serine protease chains. The cleaved chains may remain attached to the membrane thanks to disulfide bonds. It is unclear whether cleavage always takes place.

It localises to the cell membrane. Inhibited by serine protease inhibitors PMSF and 4-(2-aminoethyl)benzenesulfonyl fluoride, but not by EDTA. Serase-1 and serase-2 are serine proteases that hydrolyze the peptides N-t-Boc-Gln-Ala-Arg-AMC and N-t-Boc-Gln-Gly-Arg-AMC. In contrast, N-t-Boc-Ala-Phe-Lys-AMC and N-t-Boc-Ala-Pro-Ala-AMC are not significantly hydrolyzed. In Rattus norvegicus (Rat), this protein is Transmembrane protease serine 9 (Tmprss9).